The chain runs to 88 residues: Stannin (88 aa).

Residues 1–10 (MSIMDHSPTT) are Mitochondrial intermembrane-facing. A helical membrane pass occupies residues 11–31 (GVVTVIVILIAIAALGALILG). At 32 to 88 (CWCYLRLQRISQSEDEESIVGDGETKEPFLLVQYSAKGPCVERKAKLMTPNGPEVHG) the chain is on the cytoplasmic side. Ser49 carries the phosphoserine modification.

The protein belongs to the stannin family. As to quaternary structure, monomer.

It localises to the mitochondrion outer membrane. Plays a role in the toxic effects of organotins. Plays a role in endosomal maturation. This is Stannin (SNN) from Homo sapiens (Human).